A 220-amino-acid chain; its full sequence is MFQLLIPLLLALKGHAQDNPENVQCGHRPAFPNSSWLPFHERLQVQNGECPWQVSIQMSRKHLCGGSILHWWWVLTAAHCFRRTLLDMAVVNVTVVMGTRTFSNIHSERKQVQKEEERTWDWCWMAQWVTTNGYDQYDDLNMHLEKLRVVQISRKECAKRINQLSRNMICAWNEPGTNGIFKVLTPAQPPPPSRETVGHLWFVLFMEPRDSSKWVSSVGA.

The N-terminal stretch at 1 to 16 (MFQLLIPLLLALKGHA) is a signal peptide. Positions 23–220 (VQCGHRPAFP…SSKWVSSVGA (198 aa)) constitute a Peptidase S1 domain. An N-linked (GlcNAc...) asparagine glycan is attached at N33. Cysteines 64 and 80 form a disulfide. N92 carries N-linked (GlcNAc...) asparagine glycosylation. Residues C157 and C170 are joined by a disulfide bond.

The protein belongs to the peptidase S1 family.

The protein resides in the secreted. The protein is Serine protease-like protein 51 of Homo sapiens (Human).